The following is a 559-amino-acid chain: Potassium-transporting ATPase potassium-binding subunit (559 aa).

Transmembrane regions (helical) follow at residues 5 to 25 (GFLL…PLGV), 63 to 83 (LLAI…MLLG), 132 to 152 (GLTV…FALI), 170 to 190 (LVRI…LLFI), 250 to 270 (LTNM…CFAF), 283 to 303 (LLWA…SAEV), 329 to 349 (VLVS…AVIA), 356 to 376 (ALGG…FGGV), 379 to 399 (GLYG…LMIG), 416 to 436 (MTAL…ALAM), 484 to 504 (LLAF…MAIA), and 524 to 544 (GALF…LTFI).

The protein belongs to the KdpA family. In terms of assembly, the system is composed of three essential subunits: KdpA, KdpB and KdpC.

The protein resides in the cell inner membrane. Functionally, part of the high-affinity ATP-driven potassium transport (or Kdp) system, which catalyzes the hydrolysis of ATP coupled with the electrogenic transport of potassium into the cytoplasm. This subunit binds the periplasmic potassium ions and delivers the ions to the membrane domain of KdpB through an intramembrane tunnel. The sequence is that of Potassium-transporting ATPase potassium-binding subunit from Citrobacter koseri (strain ATCC BAA-895 / CDC 4225-83 / SGSC4696).